Reading from the N-terminus, the 156-residue chain is Endogenous retrovirus group K member 24 Pro protein (156 aa).

The region spanning 21–96 (FEGLVDTGAD…IPLNLWGRDL (76 aa)) is the Peptidase A2 domain. Residue D26 is part of the active site. One can recognise a G-patch domain in the interval 111–156 (YSPTSQKIMTKMGYIPGKGLGKNEDGIKIPFEAKINQKREGIGYPF).

It belongs to the peptidase A2 family. HERV class-II K(HML-2) subfamily. Active as a homodimer. In terms of processing, autoproteolytically processed at the N-terminus. Expected C-terminal autoprocessing not detected. The sequence shown is that of the processed Pro protein.

The catalysed reaction is Processing at the authentic HIV-1 PR recognition site and release of the mature p17 matrix and the p24 capsid protein, as a result of the cleavage of the -SQNY-|-PIVQ- cleavage site.. In terms of biological role, retroviral proteases have roles in processing of the primary translation products and the maturation of the viral particle. Endogenous Pro proteins may have kept, lost or modified their original function during evolution. This endogenous protein has retained most of the characteristics of retroviral proteases. The chain is Endogenous retrovirus group K member 24 Pro protein (ERVK-24) from Homo sapiens (Human).